A 437-amino-acid chain; its full sequence is RNA-binding motif, single-stranded-interacting protein 3 (437 aa).

The disordered stretch occupies residues 28 to 57; the sequence is YAPAPHPMAPPSPSTNSSSNNSSNNSSGEQ. Pro residues predominate over residues 31-40; the sequence is APHPMAPPSP. Low complexity predominate over residues 41–54; that stretch reads STNSSSNNSSNNSS. RRM domains lie at 61–134 and 140–225; these read TNLY…MAKQ and TNLY…FADG. Residues 399-422 are compositionally biased toward polar residues; that stretch reads TSPQTVAPSSQDTSGQQQQIAVDT. Residues 399–437 form a disordered region; it reads TSPQTVAPSSQDTSGQQQQIAVDTSNEHAPAYSYQQSKP.

Expressed in fetal brain, fetal lung, fetal liver, heart, brain, placenta, lung, liver, muscle, kidney and pancreas.

The protein localises to the cytoplasm. Functionally, binds poly(A) and poly(U) oligoribonucleotides. The chain is RNA-binding motif, single-stranded-interacting protein 3 (RBMS3) from Homo sapiens (Human).